Here is a 257-residue protein sequence, read N- to C-terminus: Cyclin-C1-1 (257 aa).

This sequence belongs to the cyclin family. Cyclin C subfamily.

This is Cyclin-C1-1 from Oryza sativa subsp. japonica (Rice).